Reading from the N-terminus, the 456-residue chain is Kynurenine 3-monooxygenase (456 aa).

It belongs to the aromatic-ring hydroxylase family. KMO subfamily. FAD serves as cofactor.

It carries out the reaction L-kynurenine + NADPH + O2 + H(+) = 3-hydroxy-L-kynurenine + NADP(+) + H2O. It participates in cofactor biosynthesis; NAD(+) biosynthesis; quinolinate from L-kynurenine: step 1/3. In terms of biological role, catalyzes the hydroxylation of L-kynurenine (L-Kyn) to form 3-hydroxy-L-kynurenine (L-3OHKyn). Required for synthesis of quinolinic acid. The polypeptide is Kynurenine 3-monooxygenase (Xanthomonas campestris pv. campestris (strain B100)).